Reading from the N-terminus, the 504-residue chain is D-alanine--D-alanyl carrier protein ligase (504 aa).

Threonine 152–serine 153 is an ATP binding site. Residue aspartate 197 coordinates D-alanine. An ATP-binding site is contributed by asparagine 292–threonine 297. Valine 301 serves as a coordination point for D-alanine. ATP-binding positions include aspartate 383, tyrosine 394–arginine 397, and lysine 492. D-alanine is bound at residue lysine 492.

This sequence belongs to the ATP-dependent AMP-binding enzyme family. DltA subfamily.

The protein localises to the cytoplasm. It carries out the reaction holo-[D-alanyl-carrier protein] + D-alanine + ATP = D-alanyl-[D-alanyl-carrier protein] + AMP + diphosphate. It participates in cell wall biogenesis; lipoteichoic acid biosynthesis. In terms of biological role, catalyzes the first step in the D-alanylation of lipoteichoic acid (LTA), the activation of D-alanine and its transfer onto the D-alanyl carrier protein (Dcp) DltC. In an ATP-dependent two-step reaction, forms a high energy D-alanyl-AMP intermediate, followed by transfer of the D-alanyl residue as a thiol ester to the phosphopantheinyl prosthetic group of the Dcp. D-alanylation of LTA plays an important role in modulating the properties of the cell wall in Gram-positive bacteria, influencing the net charge of the cell wall. The protein is D-alanine--D-alanyl carrier protein ligase of Bacillus cereus (strain ZK / E33L).